Reading from the N-terminus, the 667-residue chain is DNA ligase (667 aa).

NAD(+) contacts are provided by residues 34-38 (DSEYD), 83-84 (SL), and Glu-112. Catalysis depends on Lys-114, which acts as the N6-AMP-lysine intermediate. Positions 135, 169, 285, and 309 each coordinate NAD(+). Zn(2+)-binding residues include Cys-403, Cys-406, Cys-421, and Cys-426. A BRCT domain is found at 589 to 667 (ASDSYFAGKT…EARLISELKK (79 aa)).

Belongs to the NAD-dependent DNA ligase family. LigA subfamily. Mg(2+) is required as a cofactor. The cofactor is Mn(2+).

The enzyme catalyses NAD(+) + (deoxyribonucleotide)n-3'-hydroxyl + 5'-phospho-(deoxyribonucleotide)m = (deoxyribonucleotide)n+m + AMP + beta-nicotinamide D-nucleotide.. Its function is as follows. DNA ligase that catalyzes the formation of phosphodiester linkages between 5'-phosphoryl and 3'-hydroxyl groups in double-stranded DNA using NAD as a coenzyme and as the energy source for the reaction. It is essential for DNA replication and repair of damaged DNA. This is DNA ligase from Bacillus licheniformis (strain ATCC 14580 / DSM 13 / JCM 2505 / CCUG 7422 / NBRC 12200 / NCIMB 9375 / NCTC 10341 / NRRL NRS-1264 / Gibson 46).